Consider the following 214-residue polypeptide: Protein PsaE (214 aa).

A signal peptide spans 1-24 (MSHCVVLNKLESVLIIGDSRYALS). Positions 1 to 94 (MSHCVVLNKL…YKNEGYSYQK (94 aa)) form a DNA-binding region, ompR/PhoB-type.

Required for expression of pH 6 antigen. The polypeptide is Protein PsaE (psaE) (Yersinia pseudotuberculosis serotype I (strain IP32953)).